Consider the following 77-residue polypeptide: Translation initiation factor IF-1, chloroplastic (77 aa).

Residues 1-71 form the S1-like domain; that stretch reads MKEQKWIHEG…TRGRIIYRLR (71 aa).

It belongs to the IF-1 family. Component of the 30S ribosomal translation pre-initiation complex which assembles on the 30S ribosome in the order IF-2 and IF-3, IF-1 and N-formylmethionyl-tRNA(fMet); mRNA recruitment can occur at any time during PIC assembly.

It localises to the plastid. The protein resides in the chloroplast. Its function is as follows. One of the essential components for the initiation of protein synthesis. Stabilizes the binding of IF-2 and IF-3 on the 30S subunit to which N-formylmethionyl-tRNA(fMet) subsequently binds. Helps modulate mRNA selection, yielding the 30S pre-initiation complex (PIC). Upon addition of the 50S ribosomal subunit IF-1, IF-2 and IF-3 are released leaving the mature 70S translation initiation complex. In Antirrhinum majus (Garden snapdragon), this protein is Translation initiation factor IF-1, chloroplastic.